The sequence spans 78 residues: Acyl carrier protein (78 aa).

The region spanning 2-77 is the Carrier domain; that stretch reads SDIEARVKKI…NAIDYANTHQ (76 aa). O-(pantetheine 4'-phosphoryl)serine is present on Ser-37.

The protein belongs to the acyl carrier protein (ACP) family. Post-translationally, 4'-phosphopantetheine is transferred from CoA to a specific serine of apo-ACP by AcpS. This modification is essential for activity because fatty acids are bound in thioester linkage to the sulfhydryl of the prosthetic group.

The protein localises to the cytoplasm. It participates in lipid metabolism; fatty acid biosynthesis. Functionally, carrier of the growing fatty acid chain in fatty acid biosynthesis. The polypeptide is Acyl carrier protein (Comamonas testosteroni (Pseudomonas testosteroni)).